A 279-amino-acid polypeptide reads, in one-letter code: Putative hydroxypyruvate isomerase (279 aa).

Catalysis depends on proton donor/acceptor residues Glu-155 and Glu-256. Residues 260-279 form a disordered region; the sequence is GDDPSAQSFSWLPAGARAAR.

This sequence belongs to the hyi family.

It carries out the reaction 3-hydroxypyruvate = 2-hydroxy-3-oxopropanoate. Functionally, catalyzes the reversible isomerization between hydroxypyruvate and 2-hydroxy-3-oxopropanoate (also termed tartronate semialdehyde). The polypeptide is Putative hydroxypyruvate isomerase (Streptomyces coelicolor (strain ATCC BAA-471 / A3(2) / M145)).